The chain runs to 219 residues: HTH-type transcriptional activator FasR (219 aa).

The interval 1-30 is disordered; it reads MSDLANTAERRGEKRPAGGNRRGNRLPRDE. In terms of domain architecture, HTH tetR-type spans 29–89; it reads DERRGQLLIA…AVLQRHVDNL (61 aa). The segment at residues 52 to 71 is a DNA-binding region (H-T-H motif); the sequence is GMDEIADRAGVSKPVLYQHF.

As to quaternary structure, homodimer.

With respect to regulation, fasR:DNA binding is regulated by long-chain acyl-CoAs (C14- to C26-CoA), which act as effector molecules that modulate the affinity of FasR for its DNA binding sequences and therefore modulate the expression of the essential fas-acpS operon. In terms of biological role, transcriptional activator that plays a central role in sensing mycobacterial long-chain fatty acids and regulating lipid biosynthesis. Activates the expression of the genes encoding the fatty acid synthase (fas) and the 4-phosphopantetheinyl transferase (acpS), whose products are involved in the fatty acid and mycolic acid biosynthesis. Specifically binds to three conserved operator sequences present in the fas-acpS promoter region. Essential for M.smegmatis viability. This Mycolicibacterium smegmatis (strain ATCC 700084 / mc(2)155) (Mycobacterium smegmatis) protein is HTH-type transcriptional activator FasR.